A 906-amino-acid chain; its full sequence is Aconitate hydratase A (906 aa).

The propeptide occupies 1-2; the sequence is MS. [4Fe-4S] cluster-binding residues include Cys-441, Cys-507, and Cys-510.

This sequence belongs to the aconitase/IPM isomerase family. Monomer. Requires [4Fe-4S] cluster as cofactor.

It carries out the reaction citrate = D-threo-isocitrate. The catalysed reaction is (2S,3R)-3-hydroxybutane-1,2,3-tricarboxylate = 2-methyl-cis-aconitate + H2O. Its pathway is carbohydrate metabolism; tricarboxylic acid cycle; isocitrate from oxaloacetate: step 2/2. It functions in the pathway organic acid metabolism; propanoate degradation. In terms of biological role, involved in the catabolism of short chain fatty acids (SCFA) via the tricarboxylic acid (TCA)(acetyl degradation route) and probably the 2-methylcitrate cycle I (propionate degradation route). Catalyzes the reversible isomerization of citrate to isocitrate via cis-aconitate. Could catalyze the hydration of 2-methyl-cis-aconitate to yield (2R,3S)-2-methylisocitrate. The apo form of AcnA functions as a RNA-binding regulatory protein. This is Aconitate hydratase A (acn) from Deinococcus radiodurans (strain ATCC 13939 / DSM 20539 / JCM 16871 / CCUG 27074 / LMG 4051 / NBRC 15346 / NCIMB 9279 / VKM B-1422 / R1).